A 302-amino-acid chain; its full sequence is Glutaminase (302 aa).

The substrate site is built by serine 61, asparagine 111, glutamate 155, asparagine 162, tyrosine 186, tyrosine 238, and valine 256.

This sequence belongs to the glutaminase family. In terms of assembly, homotetramer.

The enzyme catalyses L-glutamine + H2O = L-glutamate + NH4(+). The chain is Glutaminase from Pseudomonas syringae pv. tomato (strain ATCC BAA-871 / DC3000).